The sequence spans 246 residues: Chalcone--flavanone isomerase 1 (246 aa).

Substrate-binding residues include Thr59, Asn124, and Ser201.

The protein belongs to the chalcone isomerase family. In terms of tissue distribution, mostly expressed in siliques and flowers, and, to a lower extent, in leaves.

It catalyses the reaction a chalcone = a flavanone.. The protein operates within secondary metabolite biosynthesis; flavonoid biosynthesis. Functionally, catalyzes the intramolecular cyclization of bicyclic chalcones into tricyclic (S)-flavanones. Responsible for the isomerization of 4,2',4',6'-tetrahydroxychalcone (also termed chalcone) into naringenin. The chain is Chalcone--flavanone isomerase 1 (CHI1) from Arabidopsis thaliana (Mouse-ear cress).